Reading from the N-terminus, the 427-residue chain is Endothelin-1 receptor (427 aa).

An N-terminal signal peptide occupies residues 1-20 (METFWLRLSFWVALVGGVIS). The Extracellular portion of the chain corresponds to 21–80 (DNPESYSTNLSIHVDSVATFHGTELSFVVTTHQPTNLALPSNGSMHNYCPQQTKITSAFK). 2 N-linked (GlcNAc...) asparagine glycosylation sites follow: Asn29 and Asn62. Residues 81 to 102 (YINTVISCTIFIVGMVGNATLL) form a helical membrane-spanning segment. Residues 103–112 (RIIYQNKCMR) lie on the Cytoplasmic side of the membrane. Residues 113-132 (NGPNALIASLALGDLIYVVI) traverse the membrane as a helical segment. The Extracellular portion of the chain corresponds to 133–159 (DLPINVFKLLAGRWPFEQNDFGVFLCK). Cys158 and Cys239 are oxidised to a cystine. A helical membrane pass occupies residues 160–181 (LFPFLQKSSVGITVLNLCALSV). At 182-205 (DRYRAVASWSRVQGIGIPLVTAIE) the chain is on the cytoplasmic side. Residues 206–229 (IVSIWILSFILAIPEAIGFVMVPF) traverse the membrane as a helical segment. The Extracellular portion of the chain corresponds to 230–256 (EYKGAQHRTCMLNATSKFMEFYQDVKD). Residues 257–278 (WWLFGFYFCMPLVCTAIFYTLM) form a helical membrane-spanning segment. At 279–306 (TCEMLNRRNGSLRIALSEHLKQRREVAK) the chain is on the cytoplasmic side. The chain crosses the membrane as a helical span at residues 307 to 328 (TVFCLVVIFALCWFPLHLSRIL). Topologically, residues 329–347 (KKTVYDEMDTNRCELLSFL) are extracellular. A helical transmembrane segment spans residues 348-372 (LLMDYIGINLATMNSCINPIALYFV). At 373–427 (SKKFKNCFQSCLCCCCYQSKSLMTSVPMNGTSIQWKNHEQNNHNTERSSHKDSIN) the chain is on the cytoplasmic side. Ser425 carries the phosphoserine modification.

It belongs to the G-protein coupled receptor 1 family. Endothelin receptor subfamily. EDNRA sub-subfamily. Interacts with HDAC7 and KAT5.

It is found in the cell membrane. Functionally, receptor for endothelin-1. Mediates its action by association with G proteins that activate a phosphatidylinositol-calcium second messenger system. The rank order of binding affinities for ET-A is: ET1 &gt; ET2 &gt;&gt; ET3. The chain is Endothelin-1 receptor from Bos taurus (Bovine).